Reading from the N-terminus, the 375-residue chain is 23S rRNA (uracil(747)-C(5))-methyltransferase RlmC (375 aa).

[4Fe-4S] cluster is bound by residues cysteine 3, cysteine 11, cysteine 14, and cysteine 87. Residues glutamine 212, phenylalanine 241, glutamate 262, and asparagine 307 each contribute to the S-adenosyl-L-methionine site. Catalysis depends on cysteine 334, which acts as the Nucleophile.

It belongs to the class I-like SAM-binding methyltransferase superfamily. RNA M5U methyltransferase family. RlmC subfamily.

The catalysed reaction is uridine(747) in 23S rRNA + S-adenosyl-L-methionine = 5-methyluridine(747) in 23S rRNA + S-adenosyl-L-homocysteine + H(+). Functionally, catalyzes the formation of 5-methyl-uridine at position 747 (m5U747) in 23S rRNA. This is 23S rRNA (uracil(747)-C(5))-methyltransferase RlmC from Shigella sonnei (strain Ss046).